The sequence spans 284 residues: 3-methyl-2-oxobutanoate hydroxymethyltransferase (284 aa).

Residues Asp44 and Asp83 each coordinate Mg(2+). 3-methyl-2-oxobutanoate contacts are provided by residues Asp44 to Ser45, Asp83, and Lys112. Glu114 contacts Mg(2+). Glu181 functions as the Proton acceptor in the catalytic mechanism.

This sequence belongs to the PanB family. As to quaternary structure, homodecamer; pentamer of dimers. The cofactor is Mg(2+).

Its subcellular location is the cytoplasm. The catalysed reaction is 3-methyl-2-oxobutanoate + (6R)-5,10-methylene-5,6,7,8-tetrahydrofolate + H2O = 2-dehydropantoate + (6S)-5,6,7,8-tetrahydrofolate. It participates in cofactor biosynthesis; coenzyme A biosynthesis. Its activity is regulated as follows. Neither activated nor inhibited by coenzyme A. Functionally, catalyzes the reversible reaction in which hydroxymethyl group from 5,10-methylenetetrahydrofolate is transferred onto alpha-ketoisovalerate to form ketopantoate. This chain is 3-methyl-2-oxobutanoate hydroxymethyltransferase, found in Thermococcus kodakarensis (strain ATCC BAA-918 / JCM 12380 / KOD1) (Pyrococcus kodakaraensis (strain KOD1)).